A 347-amino-acid chain; its full sequence is Probable magnetosome protein Mms36 (347 aa).

The helical transmembrane segment at 25–45 (VLVLYLAIAVVVAVLAWPWLA) threads the bilayer.

Its subcellular location is the magnetosome membrane. In terms of biological role, the 4 genes of this operon collectively influence magnetosome size and number. This chain is Probable magnetosome protein Mms36, found in Magnetospirillum gryphiswaldense (strain DSM 6361 / JCM 21280 / NBRC 15271 / MSR-1).